Here is a 431-residue protein sequence, read N- to C-terminus: Serine hydroxymethyltransferase 2 (431 aa).

(6S)-5,6,7,8-tetrahydrofolate contacts are provided by residues Leu131 and 135-137 (GHL). Lys240 bears the N6-(pyridoxal phosphate)lysine mark. Glu256 lines the (6S)-5,6,7,8-tetrahydrofolate pocket.

Belongs to the SHMT family. As to quaternary structure, homodimer. The cofactor is pyridoxal 5'-phosphate.

It is found in the cytoplasm. The catalysed reaction is (6R)-5,10-methylene-5,6,7,8-tetrahydrofolate + glycine + H2O = (6S)-5,6,7,8-tetrahydrofolate + L-serine. The protein operates within one-carbon metabolism; tetrahydrofolate interconversion. It participates in amino-acid biosynthesis; glycine biosynthesis; glycine from L-serine: step 1/1. Its function is as follows. Catalyzes the reversible interconversion of serine and glycine with tetrahydrofolate (THF) serving as the one-carbon carrier. This reaction serves as the major source of one-carbon groups required for the biosynthesis of purines, thymidylate, methionine, and other important biomolecules. Also exhibits THF-independent aldolase activity toward beta-hydroxyamino acids, producing glycine and aldehydes, via a retro-aldol mechanism. This Vibrio vulnificus (strain YJ016) protein is Serine hydroxymethyltransferase 2.